The chain runs to 302 residues: Protease HtpX homolog (302 aa).

The helical transmembrane segment at 27-47 threads the bilayer; sequence LLMAIGGIIGGTAGMLIALII. H141 provides a ligand contact to Zn(2+). E142 is an active-site residue. H145 provides a ligand contact to Zn(2+). 2 helical membrane passes run 151 to 171 and 195 to 215; these read VLVA…ANMA and IGAI…QLAI. Zn(2+) is bound at residue E220.

The protein belongs to the peptidase M48B family. It depends on Zn(2+) as a cofactor.

The protein resides in the cell inner membrane. The sequence is that of Protease HtpX homolog from Aquifex aeolicus (strain VF5).